Reading from the N-terminus, the 240-residue chain is Phosphoribosylaminoimidazole-succinocarboxamide synthase (240 aa).

This sequence belongs to the SAICAR synthetase family.

It carries out the reaction 5-amino-1-(5-phospho-D-ribosyl)imidazole-4-carboxylate + L-aspartate + ATP = (2S)-2-[5-amino-1-(5-phospho-beta-D-ribosyl)imidazole-4-carboxamido]succinate + ADP + phosphate + 2 H(+). Its pathway is purine metabolism; IMP biosynthesis via de novo pathway; 5-amino-1-(5-phospho-D-ribosyl)imidazole-4-carboxamide from 5-amino-1-(5-phospho-D-ribosyl)imidazole-4-carboxylate: step 1/2. In Wolbachia sp. subsp. Brugia malayi (strain TRS), this protein is Phosphoribosylaminoimidazole-succinocarboxamide synthase.